We begin with the raw amino-acid sequence, 234 residues long: Thrombin-like enzyme ancrod (234 aa).

One can recognise a Peptidase S1 domain in the interval 1 to 227; the sequence is VIGGDECNIN…YRDWVNNVIA (227 aa). Disulfide bonds link C7-C141, C28-C44, C78-C232, C120-C188, C152-C167, and C178-C203. A glycan (N-linked (GlcNAc...) asparagine) is linked at N23. Residue H43 is the Charge relay system of the active site. N79 carries an N-linked (GlcNAc...) asparagine glycan. D88 serves as the catalytic Charge relay system. 2 N-linked (GlcNAc...) asparagine glycosylation sites follow: N99 and N148. S182 (charge relay system) is an active-site residue. The N-linked (GlcNAc...) asparagine glycan is linked to N229.

This sequence belongs to the peptidase S1 family. Snake venom subfamily. As to quaternary structure, monomer. In terms of tissue distribution, expressed by the venom gland.

It is found in the secreted. It carries out the reaction Selective cleavage of Arg-|-Xaa bond in fibrinogen, to form fibrin, and release fibrinopeptide A. The specificity of further degradation of fibrinogen varies with species origin of the enzyme.. Functionally, thrombin-like snake venom serine protease that acts as an anticoagulant. It cleaves fibrinogen (FGA) to split off the A-fibrinopeptides (A, AY and AP), but not the B-fibrinopeptide. The resulting fibrin polymers are imperfectly formed and much smaller in size (1 to 2 um long) than the fibrin polymers produced by the action of thrombin. These ancrod-induced microthrombi are friable, unstable, urea-soluble and have significantly degraded alpha chains. They do not cross-link to form thrombi. They are markedly susceptible to digestion by plasmin and are rapidly removed from circulation by either reticuloendothelial phagocytosis or normal fibrinolysis, or both. Anticoagulation through the removal of fibrinogen from the blood is rapid, occurring within hours following its administration. It does not activate plasminogen and does not degrade preformed, fully cross-linked thrombin fibrin. It also reduces the level of plasminogen activator inhibitor (PAI) and may stimulate the release of tissue plasminogen activator (PLAT) from the endothelium. The profibrinolytic effect of these 2 actions appears to be limited to local microthrombus degradation. The chain is Thrombin-like enzyme ancrod from Calloselasma rhodostoma (Malayan pit viper).